Here is a 316-residue protein sequence, read N- to C-terminus: NADH-cytochrome b5 reductase-like (316 aa).

The region spanning 17–53 (KPVEPLPSQCCGSGCSPCVFDLYYRDLERWETARARN) is the Oxidoreductase-like domain. One can recognise an FAD-binding FR-type domain in the interval 76 to 178 (ETFLAFHIST…RGPFGSFLYE (103 aa)). Residues 158–173 (ESWR…GPFG) and 183–215 (GELL…TFVT) contribute to the FAD site.

Belongs to the flavoprotein pyridine nucleotide cytochrome reductase family. The cofactor is FAD.

It carries out the reaction 2 Fe(III)-[cytochrome b5] + NADH = 2 Fe(II)-[cytochrome b5] + NAD(+) + H(+). NADH-cytochrome b5 reductases are involved in desaturation and elongation of fatty acids, cholesterol biosynthesis, drug metabolism, and, in erythrocyte, methemoglobin reduction. This chain is NADH-cytochrome b5 reductase-like (Cyb5rl), found in Mus musculus (Mouse).